The following is a 277-amino-acid chain: Small ribosomal subunit protein uS2 (277 aa).

Composition is skewed to basic and acidic residues over residues 227–256 (QARAERQEAAAKEAAGDADKAPAEAERTEA) and 267–277 (SEAKAEGNTEA). The disordered stretch occupies residues 227–277 (QARAERQEAAAKEAAGDADKAPAEAERTEAPAEEAPAEAQSEAKAEGNTEA).

The protein belongs to the universal ribosomal protein uS2 family.

This chain is Small ribosomal subunit protein uS2, found in Corynebacterium jeikeium (strain K411).